Consider the following 280-residue polypeptide: MHSLQRKVLRTICPDQKGLIARITNICYKHELNIVQNNEFVDHRTGRFFMRTELEGIFNDSTLLADLDSALPEGSVRELNPAGRRRIVILVTKEAHCLGDLLMKANYGGLDVEIAAVIGNHDTLRSLVERFDIPFELVSHEGLSRNEHDQKMADAIDAYQPDYVVLAKYMRVLTPEFVARFPNKIINIHHSFLPAFIGARPYHQAYERGVKIIGATAHYVNDNLDEGPIIMQDVIHVDHTYTAEDMMRAGRDVEKNVLSRALYKVLAQRVFVYGNRTIIL.

In terms of domain architecture, ACT spans 8–86 (VLRTICPDQK…RELNPAGRRR (79 aa)). The active site involves D225.

The protein belongs to the PurU family.

It carries out the reaction (6R)-10-formyltetrahydrofolate + H2O = (6S)-5,6,7,8-tetrahydrofolate + formate + H(+). It functions in the pathway purine metabolism; IMP biosynthesis via de novo pathway; formate from 10-formyl-5,6,7,8-tetrahydrofolate: step 1/1. Catalyzes the hydrolysis of 10-formyltetrahydrofolate (formyl-FH4) to formate and tetrahydrofolate (FH4). In Escherichia coli O6:H1 (strain CFT073 / ATCC 700928 / UPEC), this protein is Formyltetrahydrofolate deformylase.